A 278-amino-acid polypeptide reads, in one-letter code: Cytidine kinase (278 aa).

203–208 (TRGEKG) lines the ATP pocket. D237 acts as the Proton acceptor in catalysis.

Belongs to the carbohydrate kinase PfkB family. The cofactor is Mg(2+).

It carries out the reaction cytidine + ATP = CMP + ADP + H(+). Functionally, involved in nucleoside degradation. Phosphorylates cytidine to CMP. Can also act on deoxycytidine and uridine, but is most active with cytidine. ATP is the most preferred phosphate donor, but it can also use GTP, CTP or UTP. This is Cytidine kinase from Thermococcus kodakarensis (strain ATCC BAA-918 / JCM 12380 / KOD1) (Pyrococcus kodakaraensis (strain KOD1)).